A 646-amino-acid polypeptide reads, in one-letter code: Probable lysosomal cobalamin transporter (646 aa).

The next 5 membrane-spanning stretches (helical) occupy residues 11–31 (LIWV…VITT), 42–62 (IAVS…VFLL), 102–122 (TLYT…YFWF), 149–169 (LGFV…PAAG), and 193–213 (ALTF…ILYT). Residue Asn297 is glycosylated (N-linked (GlcNAc...) asparagine). Transmembrane regions (helical) follow at residues 317–337 (LLGG…MLIT) and 380–400 (ILMA…LATI). 2 disordered regions span residues 459–588 (QPAA…PPRR) and 603–623 (VGRA…DKKE). Composition is skewed to low complexity over residues 460–490 (PAAA…SPAA) and 517–543 (PSTS…RTPR). Asn545 carries N-linked (GlcNAc...) asparagine glycosylation. A compositionally biased stretch (low complexity) spans 565-582 (APAAALARPGAISPAAPR). Asn626 carries an N-linked (GlcNAc...) asparagine glycan.

It belongs to the LIMR family. LMBRD1 subfamily.

Its subcellular location is the lysosome membrane. Probable lysosomal cobalamin transporter. Required to export cobalamin from lysosomes allowing its conversion to cofactors. The protein is Probable lysosomal cobalamin transporter of Chaetomium globosum (strain ATCC 6205 / CBS 148.51 / DSM 1962 / NBRC 6347 / NRRL 1970) (Soil fungus).